Here is a 281-residue protein sequence, read N- to C-terminus: Acetyl-coenzyme A carboxylase carboxyl transferase subunit beta (281 aa).

The CoA carboxyltransferase N-terminal domain maps to 23–281 (LWSKCEDCGA…KTLAMMRVEG (259 aa)). Residues Cys-27, Cys-30, Cys-46, and Cys-49 each coordinate Zn(2+). A C4-type zinc finger spans residues 27 to 49 (CEDCGAMLHRRQLEENLNTCNEC).

This sequence belongs to the AccD/PCCB family. Acetyl-CoA carboxylase is a heterohexamer composed of biotin carboxyl carrier protein (AccB), biotin carboxylase (AccC) and two subunits each of ACCase subunit alpha (AccA) and ACCase subunit beta (AccD). Requires Zn(2+) as cofactor.

It localises to the cytoplasm. The catalysed reaction is N(6)-carboxybiotinyl-L-lysyl-[protein] + acetyl-CoA = N(6)-biotinyl-L-lysyl-[protein] + malonyl-CoA. Its pathway is lipid metabolism; malonyl-CoA biosynthesis; malonyl-CoA from acetyl-CoA: step 1/1. Its function is as follows. Component of the acetyl coenzyme A carboxylase (ACC) complex. Biotin carboxylase (BC) catalyzes the carboxylation of biotin on its carrier protein (BCCP) and then the CO(2) group is transferred by the transcarboxylase to acetyl-CoA to form malonyl-CoA. This Chlorobium luteolum (strain DSM 273 / BCRC 81028 / 2530) (Pelodictyon luteolum) protein is Acetyl-coenzyme A carboxylase carboxyl transferase subunit beta.